Here is a 232-residue protein sequence, read N- to C-terminus: Y-linked testis-specific protein 1 (232 aa).

It belongs to the SPIN/STSY family. Expressed in testis (at protein level).

This chain is Y-linked testis-specific protein 1 (Ssty1), found in Mus musculus (Mouse).